The primary structure comprises 326 residues: tRNA-modifying protein YgfZ (326 aa).

The folate site is built by tryptophan 27 and tryptophan 189.

This sequence belongs to the tRNA-modifying YgfZ family.

Its subcellular location is the cytoplasm. Functionally, folate-binding protein involved in regulating the level of ATP-DnaA and in the modification of some tRNAs. It is probably a key factor in regulatory networks that act via tRNA modification, such as initiation of chromosomal replication. In Salmonella typhimurium (strain LT2 / SGSC1412 / ATCC 700720), this protein is tRNA-modifying protein YgfZ.